Here is a 321-residue protein sequence, read N- to C-terminus: Methionyl-tRNA formyltransferase (321 aa).

112 to 115 (SILP) lines the (6S)-5,6,7,8-tetrahydrofolate pocket.

Belongs to the Fmt family.

It catalyses the reaction L-methionyl-tRNA(fMet) + (6R)-10-formyltetrahydrofolate = N-formyl-L-methionyl-tRNA(fMet) + (6S)-5,6,7,8-tetrahydrofolate + H(+). In terms of biological role, attaches a formyl group to the free amino group of methionyl-tRNA(fMet). The formyl group appears to play a dual role in the initiator identity of N-formylmethionyl-tRNA by promoting its recognition by IF2 and preventing the misappropriation of this tRNA by the elongation apparatus. The chain is Methionyl-tRNA formyltransferase from Shewanella piezotolerans (strain WP3 / JCM 13877).